Reading from the N-terminus, the 160-residue chain is Endoribonuclease YbeY (160 aa).

Zn(2+) is bound by residues His121, His125, and His131.

It belongs to the endoribonuclease YbeY family. Zn(2+) is required as a cofactor.

It is found in the cytoplasm. In terms of biological role, single strand-specific metallo-endoribonuclease involved in late-stage 70S ribosome quality control and in maturation of the 3' terminus of the 16S rRNA. The chain is Endoribonuclease YbeY from Hydrogenovibrio crunogenus (strain DSM 25203 / XCL-2) (Thiomicrospira crunogena).